The primary structure comprises 390 residues: ATP-sensitive inward rectifier potassium channel 11 (390 aa).

The Cytoplasmic segment spans residues Met1–Asp65. ATP-binding residues include Asn48 and Arg50. The chain crosses the membrane as a helical span at residues Leu66–Leu92. The Extracellular portion of the chain corresponds to Ile93–Ser116. Residues Cys110 and Cys142 are joined by a disulfide bond. An intramembrane region (discontinuously helical; Pore-forming) is located at residues Phe117–Phe133. The K(+) site is built by Thr130 and Phe133. Residues Thr130 to Gly135 carry the Selectivity filter motif. Over Gly134 to Cys142 the chain is Extracellular. Residues Pro143–Thr171 form a helical membrane-spanning segment. Over Ala172–Ser390 the chain is Cytoplasmic. A 1,2-diacyl-sn-glycero-3-phospho-(1D-myo-inositol-4,5-bisphosphate) is bound at residue Arg176. Residue Tyr330 coordinates ATP. Thr341 is modified (phosphothreonine; by MAPK1). At Ser385 the chain carries Phosphoserine; by MAPK1.

This sequence belongs to the inward rectifier-type potassium channel (TC 1.A.2.1) family. KCNJ11 subfamily. In terms of assembly, homotetramer; the homotetramer binds four ATP molecules (one ATP per subunit). Forms an heterooctamer with ABCC8/SUR1; one KCNJ11 homotetramer interacts with four ABCC8/SUR1 molecules. Interacts with ABCC9/SUR2. Post-translationally, phosphorylation by MAPK1 results in changes in channel gating that destabilize the closed states and reduce the ATP sensitivity.

It localises to the membrane. It catalyses the reaction K(+)(in) = K(+)(out). Its activity is regulated as follows. KATP channels are regulated by cytoplasmic ATP/ADP ratios; ATP inhibits the channel by closing the pore, while ADP activates the channel. Activated by phosphatidylinositol 4,5-biphosphate (PtdIns(4,5)P2). Inward rectifier potassium channel that forms the pore of ATP-sensitive potassium channels (KATP), regulating potassium permeability as a function of cytoplasmic ATP and ADP concentrations in many different cells. Inward rectifier potassium channels are characterized by a greater tendency to allow potassium to flow into the cell rather than out of it. Their voltage dependence is regulated by the concentration of extracellular potassium; as external potassium is raised, the voltage range of the channel opening shifts to more positive voltages. The inward rectification is mainly due to the blockage of outward current by internal magnesium. Can be blocked by extracellular barium. In pancreatic cells, it forms KATP channels with ABCC8/SUR1. Can form cardiac and smooth muscle-type KATP channels with ABCC9. This is ATP-sensitive inward rectifier potassium channel 11 (Kcnj11) from Mus musculus (Mouse).